A 360-amino-acid polypeptide reads, in one-letter code: Thiol protease SEN102 (360 aa).

The signal sequence occupies residues 1 to 20; that stretch reads MAKPKFIALALVALSFLSIA. The propeptide at 21-133 is activation peptide; the sequence is QSIPFTEKDL…ENVGSLPAAS (113 aa). 3 disulfides stabilise this stretch: cysteine 151–cysteine 193, cysteine 185–cysteine 225, and cysteine 283–cysteine 335. Cysteine 154 is an active-site residue. Residues histidine 289 and asparagine 310 contribute to the active site. A glycan (N-linked (GlcNAc...) asparagine) is linked at asparagine 353. A Prevents secretion from ER motif is present at residues 357–360; sequence RDEL.

Belongs to the peptidase C1 family.

The protein localises to the endoplasmic reticulum lumen. The chain is Thiol protease SEN102 (SEN102) from Hemerocallis sp. (Daylily).